The sequence spans 119 residues: MVQENKNFATAKAKSIRVSPRKLNLVAAFIRNMKVSEALVQLTFSPKKIAKVVKDCLQSAVANAENNLGLDIDRLVITKATVGKALVMKRVMPRAKGRATRINKFFSNLYITVTEKEDN.

The protein belongs to the universal ribosomal protein uL22 family. In terms of assembly, part of the 50S ribosomal subunit.

In terms of biological role, this protein binds specifically to 23S rRNA; its binding is stimulated by other ribosomal proteins, e.g. L4, L17, and L20. It is important during the early stages of 50S assembly. It makes multiple contacts with different domains of the 23S rRNA in the assembled 50S subunit and ribosome. The globular domain of the protein is located near the polypeptide exit tunnel on the outside of the subunit, while an extended beta-hairpin is found that lines the wall of the exit tunnel in the center of the 70S ribosome. This chain is Large ribosomal subunit protein uL22, found in Rickettsia felis (strain ATCC VR-1525 / URRWXCal2) (Rickettsia azadi).